The primary structure comprises 125 residues: uncharacterized protein (125 aa).

Residues 100 to 120 (YFKVAFALAVLTPLAIWIFYI) form a helical membrane-spanning segment.

It localises to the membrane. This is an uncharacterized protein from Saccharomyces cerevisiae (strain ATCC 204508 / S288c) (Baker's yeast).